Consider the following 321-residue polypeptide: uncharacterized protein (321 aa).

Positions 130–314 (NLVYDLETTG…NDVDALIKIM (185 aa)) constitute an Exonuclease domain.

This is an uncharacterized protein from Acanthamoeba polyphaga (Amoeba).